Reading from the N-terminus, the 238-residue chain is Small ribosomal subunit protein uS2 (238 aa).

It belongs to the universal ribosomal protein uS2 family.

The polypeptide is Small ribosomal subunit protein uS2 (Actinobacillus pleuropneumoniae serotype 5b (strain L20)).